The following is a 386-amino-acid chain: Phosphatidyl-myo-inositol mannosyltransferase (386 aa).

Y9 and G16 together coordinate GDP-alpha-D-mannose. Residues Q18, 62–63 (YN), and R68 contribute to the a 1,2-diacyl-sn-glycero-3-phospho-(1D-myo-inositol) site. GDP-alpha-D-mannose is bound by residues R196, 201–202 (RK), 251–253 (VDD), K256, 274–278 (ESFGI), and E282.

It belongs to the glycosyltransferase group 1 family. Glycosyltransferase 4 subfamily. Monomer. Mg(2+) is required as a cofactor.

The protein resides in the cell membrane. The enzyme catalyses a 1,2-diacyl-sn-glycero-3-phospho-(1D-myo-inositol) + GDP-alpha-D-mannose = a 1,2-diacyl-sn-glycero-3-phospho-[alpha-D-mannopyranosyl-(1&lt;-&gt;6)-D-myo-inositol] + GDP + H(+). It participates in phospholipid metabolism; phosphatidylinositol metabolism. In terms of biological role, involved in the biosynthesis of phosphatidyl-myo-inositol mannosides (PIM) which are early precursors in the biosynthesis of lipomannans (LM) and lipoarabinomannans (LAM). Catalyzes the addition of a mannosyl residue from GDP-D-mannose (GDP-Man) to the position 2 of the carrier lipid phosphatidyl-myo-inositol (PI) to generate a phosphatidyl-myo-inositol bearing an alpha-1,2-linked mannose residue (PIM1). In contrary to PimB, the mannosyltransferase PimA is unable to transfer a mannose residue to the position 6 of the phosphatidyl-myo-inositol of PIM1. This is Phosphatidyl-myo-inositol mannosyltransferase from Mycolicibacterium smegmatis (strain ATCC 700084 / mc(2)155) (Mycobacterium smegmatis).